A 453-amino-acid polypeptide reads, in one-letter code: GTPase Der (453 aa).

EngA-type G domains lie at 3 to 167 (PIIV…INSK) and 188 to 361 (VKIA…HTSQ). Residues 9 to 16 (GRTNVGKS), 57 to 61 (DTAGI), 119 to 122 (NKID), 194 to 201 (GKPNVGKS), 241 to 245 (DTAGM), and 306 to 309 (NKCD) contribute to the GTP site. A KH-like domain is found at 362 to 446 (KKIKTSQVMK…PIKIQFKETM (85 aa)).

It belongs to the TRAFAC class TrmE-Era-EngA-EngB-Septin-like GTPase superfamily. EngA (Der) GTPase family. Associates with the 50S ribosomal subunit.

GTPase that plays an essential role in the late steps of ribosome biogenesis. This chain is GTPase Der, found in Buchnera aphidicola subsp. Schizaphis graminum (strain Sg).